A 453-amino-acid chain; its full sequence is Ankyrin repeat and SOCS box protein 16 (453 aa).

7 ANK repeats span residues 56–85, 110–139, 142–171, 175–204, 209–238, 242–279, and 283–312; these read CRDPAVHQALFSGNLQQVQALFQDEEAANM, KQTAPLAIATARGYTDCARHLIRQGAELDA, GGRAALHEACARAQFDCVRLLLTFGAKANV, EGTTPLHLCTIPESLQCAKLLLEAGATVNL, SQETPLHVAAARGLEQHVALYLEHGADVGL, QGETALNTACAGAEGPGSCRRHQAAARRLLEAGADARA, and KRHTPLHNACANGCGGLAELLLRYGARAEV. The SOCS box domain maps to 398-450; it reads YSSALCMVNQPRQLQHLARLAVRARLGSRCRQGATRLPLPPLLRDYLLLRVEG.

This sequence belongs to the ankyrin SOCS box (ASB) family.

It functions in the pathway protein modification; protein ubiquitination. Functionally, may be a substrate-recognition component of a SCF-like ECS (Elongin-Cullin-SOCS-box protein) E3 ubiquitin-protein ligase complex which mediates the ubiquitination and subsequent proteasomal degradation of target proteins. This chain is Ankyrin repeat and SOCS box protein 16 (ASB16), found in Homo sapiens (Human).